The sequence spans 114 residues: Protein lin-52 homolog (114 aa).

Residues Ser-26 and Ser-51 each carry the phosphoserine modification.

It belongs to the lin-52 family. In terms of assembly, component of the DREAM complex (also named LINC complex) at least composed of E2F4, E2F5, LIN9, LIN37, LIN52, LIN54, MYBL1, MYBL2, RBL1, RBL2, RBBP4, TFDP1 and TFDP2. The complex exists in quiescent cells where it represses cell cycle-dependent genes. It dissociates in S phase when LIN9, LIN37, LIN52 and LIN54 form a subcomplex that binds to MYBL2.

The chain is Protein lin-52 homolog (LIN52) from Pongo abelii (Sumatran orangutan).